A 207-amino-acid chain; its full sequence is Suppressor of IKBKE 1 (207 aa).

Coiled-coil stretches lie at residues 70–102 (HILLSQENTQIRDLQQENRELWISLEEHQDALE) and 162–193 (QFCKIQEKLAQLELENKELRELLSISSESLQA).

It belongs to the SIKE family. Interacts with IKBKE and TBK1 via its coiled coil region. Interaction with TBK1 is disrupted upon viral infection or TLR3 stimulation. Interacts with CDC42BPB. Interacts with SIKE1 which mediates association with the STRIPAK core complex composed of PP2A catalytic and scaffolding subunits, the striatins (PP2A regulatory subunits), the striatin-associated proteins MOB4, STRIP1 and STRIP2, PDCD10 and members of the STE20 kinases, such as STK24 and STK26. Widely expressed. Expressed in brain, heart, skeletal muscle, colon, thymus, spleen, kidney, liver, small intestine, placenta, lung and leukocytes. Present in all cell lines tested (at protein level).

It is found in the cytoplasm. In terms of biological role, physiological suppressor of IKK-epsilon and TBK1 that plays an inhibitory role in virus- and TLR3-triggered IRF3. Inhibits TLR3-mediated activation of interferon-stimulated response elements (ISRE) and the IFN-beta promoter. May act by disrupting the interactions of IKBKE or TBK1 with TICAM1/TRIF, IRF3 and RIGI. Does not inhibit NF-kappa-B activation pathways. Associates with the striatin-interacting phosphatase and kinase (STRIPAK) core complex, forming the extended (SIKE1:SLMAP)STRIPAK complex. The (SIKE1:SLMAP)STRIPAK complex dephosphorylates STK3 leading to the inhibition of Hippo signaling and the control of cell growth. The protein is Suppressor of IKBKE 1 of Homo sapiens (Human).